A 227-amino-acid chain; its full sequence is Phosphoribosylformylglycinamidine synthase subunit PurQ (227 aa).

The 223-residue stretch at Phe3–Thr225 folds into the Glutamine amidotransferase type-1 domain. Cys86 (nucleophile) is an active-site residue. Catalysis depends on residues His194 and Glu196.

Part of the FGAM synthase complex composed of 1 PurL, 1 PurQ and 2 PurS subunits.

Its subcellular location is the cytoplasm. The catalysed reaction is N(2)-formyl-N(1)-(5-phospho-beta-D-ribosyl)glycinamide + L-glutamine + ATP + H2O = 2-formamido-N(1)-(5-O-phospho-beta-D-ribosyl)acetamidine + L-glutamate + ADP + phosphate + H(+). It catalyses the reaction L-glutamine + H2O = L-glutamate + NH4(+). Its pathway is purine metabolism; IMP biosynthesis via de novo pathway; 5-amino-1-(5-phospho-D-ribosyl)imidazole from N(2)-formyl-N(1)-(5-phospho-D-ribosyl)glycinamide: step 1/2. Part of the phosphoribosylformylglycinamidine synthase complex involved in the purines biosynthetic pathway. Catalyzes the ATP-dependent conversion of formylglycinamide ribonucleotide (FGAR) and glutamine to yield formylglycinamidine ribonucleotide (FGAM) and glutamate. The FGAM synthase complex is composed of three subunits. PurQ produces an ammonia molecule by converting glutamine to glutamate. PurL transfers the ammonia molecule to FGAR to form FGAM in an ATP-dependent manner. PurS interacts with PurQ and PurL and is thought to assist in the transfer of the ammonia molecule from PurQ to PurL. The sequence is that of Phosphoribosylformylglycinamidine synthase subunit PurQ from Exiguobacterium sibiricum (strain DSM 17290 / CCUG 55495 / CIP 109462 / JCM 13490 / 255-15).